We begin with the raw amino-acid sequence, 345 residues long: Succinylglutamate desuccinylase (345 aa).

Zn(2+) contacts are provided by His64, Glu67, and His161. Residue Glu225 is part of the active site.

Belongs to the AspA/AstE family. Succinylglutamate desuccinylase subfamily. Zn(2+) serves as cofactor.

It carries out the reaction N-succinyl-L-glutamate + H2O = L-glutamate + succinate. Its pathway is amino-acid degradation; L-arginine degradation via AST pathway; L-glutamate and succinate from L-arginine: step 5/5. Its function is as follows. Transforms N(2)-succinylglutamate into succinate and glutamate. This chain is Succinylglutamate desuccinylase, found in Shewanella piezotolerans (strain WP3 / JCM 13877).